We begin with the raw amino-acid sequence, 607 residues long: UvrABC system protein C (607 aa).

The GIY-YIG domain occupies 15–94 (ENPGVYLMKN…IKRHRPYFNV (80 aa)). The UVR domain maps to 204-239 (DQVLKLLIRLMNEASARLDYETAALRRDQIASIKEV).

It belongs to the UvrC family. As to quaternary structure, interacts with UvrB in an incision complex.

It localises to the cytoplasm. Functionally, the UvrABC repair system catalyzes the recognition and processing of DNA lesions. UvrC both incises the 5' and 3' sides of the lesion. The N-terminal half is responsible for the 3' incision and the C-terminal half is responsible for the 5' incision. The chain is UvrABC system protein C from Dehalococcoides mccartyi (strain CBDB1).